The sequence spans 190 residues: Remorin (190 aa).

The segment covering 1–12 (MAEEQKTSKVDV) has biased composition (basic and acidic residues). Disordered stretches follow at residues 1–45 (MAEE…VESK) and 50–69 (VEKP…SADR). Serine 14 bears the Phosphoserine mark. At threonine 58 the chain carries Phosphothreonine. A coiled-coil region spans residues 92–147 (EKSKAENRAQKKISDVHAWENSKKAAVEAQLRKIEEKLEKKKAQYGEKMKNKVAAI).

This sequence belongs to the remorin family. As to quaternary structure, may polymerize to form filamentous structures. In terms of tissue distribution, expressed in roots, leaves, stems, flowers and siliques, with a maximal expression in apical regions.

In terms of biological role, exhibits a non sequence-specific DNA-binding activity. This chain is Remorin (DBP), found in Arabidopsis thaliana (Mouse-ear cress).